An 84-amino-acid polypeptide reads, in one-letter code: Small ribosomal subunit protein bS20 (84 aa).

This sequence belongs to the bacterial ribosomal protein bS20 family.

In terms of biological role, binds directly to 16S ribosomal RNA. This chain is Small ribosomal subunit protein bS20, found in Limosilactobacillus reuteri (strain DSM 20016) (Lactobacillus reuteri).